The following is a 287-amino-acid chain: Co-chaperone protein DjlA (287 aa).

The Periplasmic portion of the chain corresponds to 1–6; the sequence is MQIFGK. Residues 7–30 traverse the membrane as a helical segment; it reads ILGAFFGFLFGGVFGALFGLFIGH. At 31–287 the chain is on the cytoplasmic side; sequence QFDKARRLSQ…DLIKKEKGFK (257 aa). The interval 192–213 is disordered; it reads GGFGGQQHQSHHSSSHGGWQQA. Positions 221–287 constitute a J domain; it reads DAYKILGIDA…DLIKKEKGFK (67 aa).

In terms of assembly, homodimer.

It localises to the cell inner membrane. Its function is as follows. Regulatory DnaK co-chaperone. Direct interaction between DnaK and DjlA is needed for the induction of the wcaABCDE operon, involved in the synthesis of a colanic acid polysaccharide capsule, possibly through activation of the RcsB/RcsC phosphotransfer signaling pathway. The colanic acid capsule may help the bacterium survive conditions outside the host. This Vibrio vulnificus (strain YJ016) protein is Co-chaperone protein DjlA.